A 597-amino-acid chain; its full sequence is Protein Spindly (597 aa).

N-acetylmethionine is present on methionine 1. A coiled-coil region spans residues methionine 1–arginine 445. 2 positions are modified to phosphoserine: serine 508 and serine 547. Residues proline 531 to glutamine 597 form a disordered region. Positions glutamine 540–arginine 549 are enriched in polar residues. Positions leucine 550 to alanine 574 are enriched in basic and acidic residues. A compositionally biased stretch (polar residues) spans tyrosine 583–glutamine 597.

It belongs to the Spindly family. As to quaternary structure, interacts with KNTC1 and ZW10. These interactions appear weak and may be transient or indirect. Interacts with dynein intermediate chain and dynactin (DCTN1). Interacts with the catalytically active form of USP45. In terms of processing, monoubiquitinated with'Lys-48' linkage. Deubiquitinated by USP45.

The protein resides in the cytoplasm. Its subcellular location is the cytoskeleton. It is found in the microtubule organizing center. It localises to the centrosome. The protein localises to the chromosome. The protein resides in the centromere. Its subcellular location is the kinetochore. It is found in the nucleus. It localises to the spindle pole. Functionally, required for the localization of dynein and dynactin to the mitotic kintochore. Dynein is believed to control the initial lateral interaction between the kinetochore and spindle microtubules and to facilitate the subsequent formation of end-on kinetochore-microtubule attachments mediated by the NDC80 complex. Also required for correct spindle orientation. Does not appear to be required for the removal of spindle assembly checkpoint (SAC) proteins from the kinetochore upon bipolar spindle attachment. Acts as an adapter protein linking the dynein motor complex to various cargos and converts dynein from a non-processive to a highly processive motor in the presence of dynactin. Facilitates the interaction between dynein and dynactin and activates dynein processivity (the ability to move along a microtubule for a long distance without falling off the track). Plays a role in cell migration. This Rattus norvegicus (Rat) protein is Protein Spindly (Spdl1).